Here is an 89-residue protein sequence, read N- to C-terminus: Small ribosomal subunit protein uS15 (89 aa).

It belongs to the universal ribosomal protein uS15 family. Part of the 30S ribosomal subunit. Forms a bridge to the 50S subunit in the 70S ribosome, contacting the 23S rRNA.

Functionally, one of the primary rRNA binding proteins, it binds directly to 16S rRNA where it helps nucleate assembly of the platform of the 30S subunit by binding and bridging several RNA helices of the 16S rRNA. In terms of biological role, forms an intersubunit bridge (bridge B4) with the 23S rRNA of the 50S subunit in the ribosome. The chain is Small ribosomal subunit protein uS15 from Ectopseudomonas mendocina (strain ymp) (Pseudomonas mendocina).